Reading from the N-terminus, the 345-residue chain is Eukaryotic translation initiation factor 3 subunit F (345 aa).

The MPN domain maps to 30 to 166 (VVIQPQAIFS…TRAYISAPVG (137 aa)). A disordered region spans residues 310–345 (EGASAEAGAQRGQRGGRGGRGGQQRTQERASEEVRA). The segment covering 312–321 (ASAEAGAQRG) has biased composition (low complexity). The span at 322-331 (QRGGRGGRGG) shows a compositional bias: gly residues. The segment covering 335–345 (TQERASEEVRA) has biased composition (basic and acidic residues).

This sequence belongs to the eIF-3 subunit F family. Component of the eukaryotic translation initiation factor 3 (eIF-3) complex.

The protein localises to the cytoplasm. Functionally, component of the eukaryotic translation initiation factor 3 (eIF-3) complex, which is involved in protein synthesis of a specialized repertoire of mRNAs and, together with other initiation factors, stimulates binding of mRNA and methionyl-tRNAi to the 40S ribosome. The eIF-3 complex specifically targets and initiates translation of a subset of mRNAs involved in cell proliferation. This chain is Eukaryotic translation initiation factor 3 subunit F, found in Neosartorya fischeri (strain ATCC 1020 / DSM 3700 / CBS 544.65 / FGSC A1164 / JCM 1740 / NRRL 181 / WB 181) (Aspergillus fischerianus).